A 597-amino-acid polypeptide reads, in one-letter code: (E)-sabinene hydrate synthase, chloroplastic (597 aa).

The transit peptide at 1-47 (MSTISINHVGILRNPLQCKNKRTSINKPWSLSLPRSSPASRLVKPCR) directs the protein to the chloroplast. Aspartate 353 and aspartate 357 together coordinate Mn(2+). The DDXXD motif signature appears at 353-357 (DDVYD). Homodimerization regions lie at residues 359-365 (YGTLDEL) and 431-468 (EAGWYENGYTPSLEEYLTNATISIGVPPIVLPVEVSLP). Mn(2+)-binding residues include aspartate 495 and glutamate 503.

This sequence belongs to the terpene synthase family. As to quaternary structure, homodimer. It depends on Mn(2+) as a cofactor. Mg(2+) serves as cofactor.

It is found in the plastid. Its subcellular location is the chloroplast. It carries out the reaction (2E)-geranyl diphosphate + H2O = sabinene hydrate + diphosphate. It functions in the pathway secondary metabolite biosynthesis; terpenoid biosynthesis. In terms of biological role, involved in the biosynthesis of phenolic monoterpenes natural products. Monoterpene synthase which catalyzes the conversion of geranyl diphosphate (GPP) to sabinene hydrate, specifically (E)-sabinene hydrate, and the formation of minor amounts and traces of several other monoterpenes (e.g. mainly alpha-pinene, limonene and alpha-terpineol). In Thymus vulgaris (Thyme), this protein is (E)-sabinene hydrate synthase, chloroplastic.